The following is a 184-amino-acid chain: ATP synthase subunit b, chloroplastic (184 aa).

The chain crosses the membrane as a helical span at residues L27–L49.

It belongs to the ATPase B chain family. F-type ATPases have 2 components, F(1) - the catalytic core - and F(0) - the membrane proton channel. F(1) has five subunits: alpha(3), beta(3), gamma(1), delta(1), epsilon(1). F(0) has four main subunits: a(1), b(1), b'(1) and c(10-14). The alpha and beta chains form an alternating ring which encloses part of the gamma chain. F(1) is attached to F(0) by a central stalk formed by the gamma and epsilon chains, while a peripheral stalk is formed by the delta, b and b' chains.

It is found in the plastid. It localises to the chloroplast thylakoid membrane. Functionally, f(1)F(0) ATP synthase produces ATP from ADP in the presence of a proton or sodium gradient. F-type ATPases consist of two structural domains, F(1) containing the extramembraneous catalytic core and F(0) containing the membrane proton channel, linked together by a central stalk and a peripheral stalk. During catalysis, ATP synthesis in the catalytic domain of F(1) is coupled via a rotary mechanism of the central stalk subunits to proton translocation. Component of the F(0) channel, it forms part of the peripheral stalk, linking F(1) to F(0). The protein is ATP synthase subunit b, chloroplastic of Draba nemorosa (Woodland whitlowgrass).